The chain runs to 494 residues: Putative NAD kinase 3 (494 aa).

Belongs to the NAD kinase family.

It carries out the reaction NAD(+) + ATP = ADP + NADP(+) + H(+). The chain is Putative NAD kinase 3 from Oryza sativa subsp. japonica (Rice).